The sequence spans 297 residues: Virulence genes transcriptional activator (297 aa).

Residues Met1–Thr61 form the HTH lysR-type domain. Residues Phe21 to Ser40 constitute a DNA-binding region (H-T-H motif).

The protein belongs to the LysR transcriptional regulatory family.

Its subcellular location is the cytoplasm. Positive regulator for the plasmid-encoded virulence factors SpvA, SpvB, and SpvC. The protein is Virulence genes transcriptional activator (mkaC) of Salmonella typhimurium (strain LT2 / SGSC1412 / ATCC 700720).